The sequence spans 434 residues: Asparagine--tRNA ligase (434 aa).

It belongs to the class-II aminoacyl-tRNA synthetase family.

The protein resides in the cytoplasm. The catalysed reaction is tRNA(Asn) + L-asparagine + ATP = L-asparaginyl-tRNA(Asn) + AMP + diphosphate + H(+). This is Asparagine--tRNA ligase from Pyrococcus horikoshii (strain ATCC 700860 / DSM 12428 / JCM 9974 / NBRC 100139 / OT-3).